A 282-amino-acid polypeptide reads, in one-letter code: D-alanine aminotransferase (282 aa).

Y32 serves as a coordination point for substrate. Residue R51 coordinates pyridoxal 5'-phosphate. Substrate-binding residues include R99 and H101. K146 serves as the catalytic Proton acceptor. Position 146 is an N6-(pyridoxal phosphate)lysine (K146). E178 is a pyridoxal 5'-phosphate binding site.

The protein belongs to the class-IV pyridoxal-phosphate-dependent aminotransferase family. Homodimer. Pyridoxal 5'-phosphate serves as cofactor.

The catalysed reaction is D-alanine + 2-oxoglutarate = D-glutamate + pyruvate. Its function is as follows. Acts on the D-isomers of alanine, leucine, aspartate, glutamate, aminobutyrate, norvaline and asparagine. The enzyme transfers an amino group from a substrate D-amino acid to the pyridoxal phosphate cofactor to form pyridoxamine and an alpha-keto acid in the first half-reaction. The second half-reaction is the reverse of the first, transferring the amino group from the pyridoxamine to a second alpha-keto acid to form the product D-amino acid via a ping-pong mechanism. This is an important process in the formation of D-alanine and D-glutamate, which are essential bacterial cell wall components. In Staphylococcus aureus (strain MW2), this protein is D-alanine aminotransferase (dat).